The primary structure comprises 134 residues: Profilin-3 (134 aa).

A disulfide bridge connects residues cysteine 13 and cysteine 118. The Involved in PIP2 interaction motif lies at 84–100; the sequence is AVIRGKKGSGGITIKKT. Position 114 is a phosphothreonine (threonine 114).

This sequence belongs to the profilin family. As to quaternary structure, occurs in many kinds of cells as a complex with monomeric actin in a 1:1 ratio. Post-translationally, phosphorylated by MAP kinases.

Its subcellular location is the cytoplasm. It localises to the cytoskeleton. Functionally, binds to actin and affects the structure of the cytoskeleton. At high concentrations, profilin prevents the polymerization of actin, whereas it enhances it at low concentrations. This Olea europaea (Common olive) protein is Profilin-3.